Reading from the N-terminus, the 158-residue chain is Transcription elongation factor GreA (158 aa).

This sequence belongs to the GreA/GreB family.

Functionally, necessary for efficient RNA polymerase transcription elongation past template-encoded arresting sites. The arresting sites in DNA have the property of trapping a certain fraction of elongating RNA polymerases that pass through, resulting in locked ternary complexes. Cleavage of the nascent transcript by cleavage factors such as GreA or GreB allows the resumption of elongation from the new 3'terminus. GreA releases sequences of 2 to 3 nucleotides. This is Transcription elongation factor GreA from Yersinia pestis.